The primary structure comprises 124 residues: Large ribosomal subunit protein bL12 (124 aa).

This sequence belongs to the bacterial ribosomal protein bL12 family. In terms of assembly, homodimer. Part of the ribosomal stalk of the 50S ribosomal subunit. Forms a multimeric L10(L12)X complex, where L10 forms an elongated spine to which 2 to 4 L12 dimers bind in a sequential fashion. Binds GTP-bound translation factors.

Functionally, forms part of the ribosomal stalk which helps the ribosome interact with GTP-bound translation factors. Is thus essential for accurate translation. This is Large ribosomal subunit protein bL12 from Borreliella burgdorferi (strain ATCC 35210 / DSM 4680 / CIP 102532 / B31) (Borrelia burgdorferi).